Here is a 212-residue protein sequence, read N- to C-terminus: MNIVVLISGNGSNLQAIIDACKTNKIKGTVRAVFSNKADAFGLERARQAGIATHTLIASAFDSREAYDRELIHEIDMYAPDVVVLAGFMRILSPAFVSHYAGRLLNIHPSLLPKYPGLHTHRQALENGDEEHGTSVHFVTDELDGGPVILQAKVPVFAGDSEDDITARVQTQEHAIYPLVISWFADGRLKMHENAAWLDGQRLPPQGYAADE.

11 to 13 (GSN) provides a ligand contact to N(1)-(5-phospho-beta-D-ribosyl)glycinamide. Residues R64, 89–92 (MRIL), and N106 each bind (6R)-10-formyltetrahydrofolate. H108 functions as the Proton donor in the catalytic mechanism. 140–144 (TDELD) is a (6R)-10-formyltetrahydrofolate binding site. A N(1)-(5-phospho-beta-D-ribosyl)glycinamide-binding site is contributed by 170–173 (QTQE).

This sequence belongs to the GART family. In terms of assembly, monomer. Homodimer below pH 6.8.

It catalyses the reaction N(1)-(5-phospho-beta-D-ribosyl)glycinamide + (6R)-10-formyltetrahydrofolate = N(2)-formyl-N(1)-(5-phospho-beta-D-ribosyl)glycinamide + (6S)-5,6,7,8-tetrahydrofolate + H(+). The protein operates within purine metabolism; IMP biosynthesis via de novo pathway; N(2)-formyl-N(1)-(5-phospho-D-ribosyl)glycinamide from N(1)-(5-phospho-D-ribosyl)glycinamide (10-formyl THF route): step 1/1. With respect to regulation, inhibited by N10-(bromoacetyl)-5,8-dideazafolate. Functionally, catalyzes the transfer of a formyl group from 10-formyltetrahydrofolate to 5-phospho-ribosyl-glycinamide (GAR), producing 5-phospho-ribosyl-N-formylglycinamide (FGAR) and tetrahydrofolate. The polypeptide is Phosphoribosylglycinamide formyltransferase (Escherichia coli (strain K12)).